The sequence spans 638 residues: Threonine--tRNA ligase (638 aa).

In terms of domain architecture, TGS spans 1–61 (MPIITLPDGT…DYDAEIKIIT (61 aa)). The interval 242–533 (DHRKIGKKMD…LIENYAGNFP (292 aa)) is catalytic. Residues C333, H384, and H510 each coordinate Zn(2+).

It belongs to the class-II aminoacyl-tRNA synthetase family. As to quaternary structure, homodimer. Requires Zn(2+) as cofactor.

Its subcellular location is the cytoplasm. The catalysed reaction is tRNA(Thr) + L-threonine + ATP = L-threonyl-tRNA(Thr) + AMP + diphosphate + H(+). Its function is as follows. Catalyzes the attachment of threonine to tRNA(Thr) in a two-step reaction: L-threonine is first activated by ATP to form Thr-AMP and then transferred to the acceptor end of tRNA(Thr). Also edits incorrectly charged L-seryl-tRNA(Thr). In Prochlorococcus marinus (strain MIT 9211), this protein is Threonine--tRNA ligase.